A 510-amino-acid chain; its full sequence is NAD(P)H-quinone oxidoreductase subunit 2 A, chloroplastic (510 aa).

The next 14 membrane-spanning stretches (helical) occupy residues F31–T51, W59–W79, I99–I119, M124–C144, L149–Y169, L184–L204, I229–F249, P261–T281, W295–I315, M323–D343, Y354–L374, A395–F415, L418–L438, and M484–I504.

The protein belongs to the complex I subunit 2 family. As to quaternary structure, NDH is composed of at least 16 different subunits, 5 of which are encoded in the nucleus.

It is found in the plastid. Its subcellular location is the chloroplast thylakoid membrane. The catalysed reaction is a plastoquinone + NADH + (n+1) H(+)(in) = a plastoquinol + NAD(+) + n H(+)(out). The enzyme catalyses a plastoquinone + NADPH + (n+1) H(+)(in) = a plastoquinol + NADP(+) + n H(+)(out). Its function is as follows. NDH shuttles electrons from NAD(P)H:plastoquinone, via FMN and iron-sulfur (Fe-S) centers, to quinones in the photosynthetic chain and possibly in a chloroplast respiratory chain. The immediate electron acceptor for the enzyme in this species is believed to be plastoquinone. Couples the redox reaction to proton translocation, and thus conserves the redox energy in a proton gradient. The sequence is that of NAD(P)H-quinone oxidoreductase subunit 2 A, chloroplastic from Saccharum hybrid (Sugarcane).